A 310-amino-acid polypeptide reads, in one-letter code: Protein LRATD2 (310 aa).

Residues Met-1–Pro-76 form a disordered region. A compositionally biased stretch (gly residues) spans Pro-54–Asp-64. Pro residues predominate over residues Gly-65 to Tyr-74. Residues Val-122–Ile-217 form the LRAT domain. The segment at His-274–His-310 is disordered. Residues Thr-289–Pro-298 are compositionally biased toward pro residues. The span at Ser-300 to His-310 shows a compositional bias: acidic residues.

This sequence belongs to the LRATD family. In terms of tissue distribution, expressed in esophageal squamous cell carcinomas.

The chain is Protein LRATD2 from Homo sapiens (Human).